The following is a 529-amino-acid chain: MTQTLLAIENLSVGFRHQQTVRTVVNDVSLQIEAGETLALVGESGSGKSVTALSILRLLPSPPVEYLSGDIRFHGESLLHASDQTLRGVRGNKIAMIFQEPMVSLNPLHTLEKQLYEVLSLHRGMRREAARGEILNCLDRVGIRQAAKRLTDYPHQLSGGERQRVMIAMALLTRPELLIADEPTTALDVSVQAQILQLLRELQGELNMGMLFITHNLSIVRKLAHRVAVMQNGRCVEQNYAATLFASPTHPYTQKLLNSEPSGDPVPLPEPASTLLDVEQLQVAFPIRKGILKRIVDHNVVVKNISFTLRAGETLGLVGESGSGKSTTGLALLRLINSQGSIIFDGQPLQNLNRRQLLPIRHRIQVVFQDPNSSLNPRLNVLQIIEEGLRVHQPTLSAAQREQQVIAVMHEVGLDPETRHRYPAEFSGGQRQRIAIARALILKPSLIILDEPTSSLDKTVQAQILTLLKSLQQKHQLAYLFISHDLHVVRALCHQVIILRQGEVVEQGPCARVFATPQQEYTRQLLALS.

ABC transporter domains are found at residues 6–257 (LAIE…QKLL) and 287–526 (IRKG…RQLL). ATP contacts are provided by residues 42–49 (GESGSGKS) and 319–326 (GESGSGKS).

The protein belongs to the ABC transporter superfamily.

This is an uncharacterized protein from Escherichia coli (strain K12).